Consider the following 122-residue polypeptide: Large ribosomal subunit protein uL14 (122 aa).

The protein belongs to the universal ribosomal protein uL14 family. Part of the 50S ribosomal subunit. Forms a cluster with proteins L3 and L19. In the 70S ribosome, L14 and L19 interact and together make contacts with the 16S rRNA in bridges B5 and B8.

Functionally, binds to 23S rRNA. Forms part of two intersubunit bridges in the 70S ribosome. The chain is Large ribosomal subunit protein uL14 from Clavibacter michiganensis subsp. michiganensis (strain NCPPB 382).